The sequence spans 94 residues: Large ribosomal subunit protein bL25 (94 aa).

Belongs to the bacterial ribosomal protein bL25 family. As to quaternary structure, part of the 50S ribosomal subunit; part of the 5S rRNA/L5/L18/L25 subcomplex. Contacts the 5S rRNA. Binds to the 5S rRNA independently of L5 and L18.

Its function is as follows. This is one of the proteins that binds to the 5S RNA in the ribosome where it forms part of the central protuberance. In Sodalis glossinidius (strain morsitans), this protein is Large ribosomal subunit protein bL25.